Reading from the N-terminus, the 337-residue chain is D-alanine--D-alanine ligase (337 aa).

Residues 124–330 (KMWFSALGIP…FTEYLSLVIN (207 aa)) form the ATP-grasp domain. ATP is bound at residue 154–209 (ALANWGSIFIKAASQGSSVGCYKVDDSSKVAQVLKDAFGYAPYVVVEKTIKARELE). Residues aspartate 284, glutamate 297, and asparagine 299 each coordinate Mg(2+).

Belongs to the D-alanine--D-alanine ligase family. It depends on Mg(2+) as a cofactor. Mn(2+) serves as cofactor.

It is found in the cytoplasm. It carries out the reaction 2 D-alanine + ATP = D-alanyl-D-alanine + ADP + phosphate + H(+). Its pathway is cell wall biogenesis; peptidoglycan biosynthesis. Functionally, cell wall formation. The polypeptide is D-alanine--D-alanine ligase (Shewanella putrefaciens (strain CN-32 / ATCC BAA-453)).